Here is a 146-residue protein sequence, read N- to C-terminus: Large ribosomal subunit protein uL15 (146 aa).

The tract at residues 1-46 (MLHQIKPFKGARKTVKRLGRGCGSGTGKTSGKGHKGQLARSGGGVR) is disordered. Residues 9–19 (KGARKTVKRLG) are compositionally biased toward basic residues. Residues 20–30 (RGCGSGTGKTS) show a composition bias toward gly residues.

Belongs to the universal ribosomal protein uL15 family. In terms of assembly, part of the 50S ribosomal subunit.

Its function is as follows. Binds to the 23S rRNA. This Phytoplasma mali (strain AT) protein is Large ribosomal subunit protein uL15.